A 1455-amino-acid polypeptide reads, in one-letter code: Nik-related protein kinase (1455 aa).

The Protein kinase domain maps to 25–313 (FSLDKAIGLG…SGNMLLHPFV (289 aa)). ATP contacts are provided by residues 31 to 39 (IGLGTYGRI) and lysine 54. The active-site Proton acceptor is the aspartate 177. 2 disordered regions span residues 385–404 (LHGE…PQDQ) and 471–568 (TQDN…EDKE). Residues 471–480 (TQDNKATSPE) show a composition bias toward polar residues. The segment covering 494–505 (EALETEQPKDLD) has biased composition (basic and acidic residues). Over residues 520-531 (QPRQGQAAEQQQ) the composition is skewed to low complexity. The span at 540-568 (PPEEDREPEQAEVQEEAVEPPQAEIEDKE) shows a compositional bias: acidic residues. Positions 716–750 (RRRHRRWEDIFNQHEEQLRRVENDREDDSSDNDEV) form a coiled coil. Disordered stretches follow at residues 760 to 854 (IEPH…PPYS) and 1029 to 1080 (AFGN…TETS). Serine 847 and serine 850 each carry phosphoserine. Over residues 1029-1038 (AFGNHGANRG) the composition is skewed to low complexity. The span at 1044-1078 (RNREANGRNEENGAFGRDQHVFPEFEHEESDRGTE) shows a compositional bias: basic and acidic residues. The 288-residue stretch at 1138–1425 (SSEVYCGSLW…RFLCARGDKM (288 aa)) folds into the CNH domain.

Belongs to the protein kinase superfamily. STE Ser/Thr protein kinase family. STE20 subfamily.

The enzyme catalyses L-seryl-[protein] + ATP = O-phospho-L-seryl-[protein] + ADP + H(+). It catalyses the reaction L-threonyl-[protein] + ATP = O-phospho-L-threonyl-[protein] + ADP + H(+). May phosphorylate cofilin-1 and induce actin polymerization through this process, during the late stages of embryogenesis. Involved in the TNF-alpha-induced signaling pathway. The sequence is that of Nik-related protein kinase (Nrk) from Mus musculus (Mouse).